Consider the following 119-residue polypeptide: Large ribosomal subunit protein bL20 (119 aa).

This sequence belongs to the bacterial ribosomal protein bL20 family.

Its function is as follows. Binds directly to 23S ribosomal RNA and is necessary for the in vitro assembly process of the 50S ribosomal subunit. It is not involved in the protein synthesizing functions of that subunit. In Ruthia magnifica subsp. Calyptogena magnifica, this protein is Large ribosomal subunit protein bL20.